A 225-amino-acid chain; its full sequence is Peptidyl-tRNA hydrolase (225 aa).

Tyrosine 14 contributes to the tRNA binding site. The Proton acceptor role is filled by histidine 19. TRNA contacts are provided by phenylalanine 64, asparagine 66, and asparagine 112. The segment at 182 to 225 (AVALRMQPPKPEKPKPAAKAPEAQAPEAAPDERSALQKLADRFR) is disordered. The segment covering 198–209 (AAKAPEAQAPEA) has biased composition (low complexity). Over residues 211 to 225 (PDERSALQKLADRFR) the composition is skewed to basic and acidic residues.

The protein belongs to the PTH family. Monomer.

It is found in the cytoplasm. The catalysed reaction is an N-acyl-L-alpha-aminoacyl-tRNA + H2O = an N-acyl-L-amino acid + a tRNA + H(+). Hydrolyzes ribosome-free peptidyl-tRNAs (with 1 or more amino acids incorporated), which drop off the ribosome during protein synthesis, or as a result of ribosome stalling. In terms of biological role, catalyzes the release of premature peptidyl moieties from peptidyl-tRNA molecules trapped in stalled 50S ribosomal subunits, and thus maintains levels of free tRNAs and 50S ribosomes. This is Peptidyl-tRNA hydrolase from Cereibacter sphaeroides (strain ATCC 17029 / ATH 2.4.9) (Rhodobacter sphaeroides).